Consider the following 277-residue polypeptide: Ribosomally synthesized cyclic peptide asperipin-2a precursor aprA (277 aa).

The N-terminal stretch at 1–19 is a signal peptide; sequence MHLSRYIAVLLSASSFVSA. Propeptides lie at residues 20–69, 76–88, 95–107, 114–126, 133–145, 152–164, 171–183, 190–202, 209–221, 228–240, 247–259, and 266–277; these read LPLQ…LDKR, KRNA…LDKR, and KRNAETPEDLDK.

Post-translationally, aprA is processed by kexin proteases to produce 11 identical copies of the hexapeptide Phe-Tyr-Tyr-Thr-Gly-Tyr, that is further modified aprY and aprR to yield asperipin-2a. The bicyclic structure of asperipin-2a is likely synthesized by the single ustYa family oxidase aprY. The reductase aprR may be required for the final reduction to yield asperipin-2a.

It participates in secondary metabolite biosynthesis. Functionally, ribosomally synthesized cyclic peptide asperipin-2a precursor; part of the gene cluster that mediates the biosynthesis of the asperipin-2a, a bicyclic peptide that possesses two macrocyclic ether rings consisting of 14- and 17-membered paracyclophans. The aprA translated product contains a 11-fold repeated peptide embedding the hexapeptide Phe-Tyr-Tyr-Thr-Gly-Tyr, that is converted into asperipin-2a. After being excised from the precursor peptide by kexin proteases, the core peptides are cyclized and modified post-translationally by enzymes encoded within the corresponding gene cluster. In Aspergillus flavus (strain ATCC 200026 / FGSC A1120 / IAM 13836 / NRRL 3357 / JCM 12722 / SRRC 167), this protein is Ribosomally synthesized cyclic peptide asperipin-2a precursor aprA.